Reading from the N-terminus, the 54-residue chain is Defensin-like protein 1 (54 aa).

Cystine bridges form between C6–C54, C17–C39, C23–C48, and C27–C50.

The protein belongs to the DEFL family.

The protein resides in the secreted. In terms of biological role, possesses antifungal activity insensitive to inorganic cations. Causes germ tubes and hyphae to swell and form multiple hyphal buds. Binds to the plasma membrane of the fungus. Has no inhibitory effect on insect gut alpha-amylase. The polypeptide is Defensin-like protein 1 (Heuchera sanguinea (Coralbells)).